The primary structure comprises 434 residues: Methylenetetrahydrofolate--tRNA-(uracil-5-)-methyltransferase TrmFO (434 aa).

10–15 (GAGLAG) contributes to the FAD binding site.

It belongs to the MnmG family. TrmFO subfamily. FAD is required as a cofactor.

Its subcellular location is the cytoplasm. The catalysed reaction is uridine(54) in tRNA + (6R)-5,10-methylene-5,6,7,8-tetrahydrofolate + NADH + H(+) = 5-methyluridine(54) in tRNA + (6S)-5,6,7,8-tetrahydrofolate + NAD(+). It catalyses the reaction uridine(54) in tRNA + (6R)-5,10-methylene-5,6,7,8-tetrahydrofolate + NADPH + H(+) = 5-methyluridine(54) in tRNA + (6S)-5,6,7,8-tetrahydrofolate + NADP(+). Its function is as follows. Catalyzes the folate-dependent formation of 5-methyl-uridine at position 54 (M-5-U54) in all tRNAs. The chain is Methylenetetrahydrofolate--tRNA-(uracil-5-)-methyltransferase TrmFO from Bacillus cereus (strain ATCC 14579 / DSM 31 / CCUG 7414 / JCM 2152 / NBRC 15305 / NCIMB 9373 / NCTC 2599 / NRRL B-3711).